The chain runs to 63 residues: Large ribosomal subunit protein uL29 (63 aa).

This sequence belongs to the universal ribosomal protein uL29 family.

The protein is Large ribosomal subunit protein uL29 of Shewanella oneidensis (strain ATCC 700550 / JCM 31522 / CIP 106686 / LMG 19005 / NCIMB 14063 / MR-1).